Here is a 176-residue protein sequence, read N- to C-terminus: Inorganic pyrophosphatase (176 aa).

Substrate-binding residues include lysine 30, arginine 44, and tyrosine 56. Residues aspartate 66, aspartate 71, and aspartate 103 each contribute to the Mg(2+) site. Residue tyrosine 142 coordinates substrate.

The protein belongs to the PPase family. In terms of assembly, homohexamer. Mg(2+) serves as cofactor.

Its subcellular location is the cytoplasm. It catalyses the reaction diphosphate + H2O = 2 phosphate + H(+). Functionally, catalyzes the hydrolysis of inorganic pyrophosphate (PPi) forming two phosphate ions. This Vibrio cholerae serotype O1 (strain ATCC 39315 / El Tor Inaba N16961) protein is Inorganic pyrophosphatase.